Consider the following 554-residue polypeptide: HMG box-containing protein 4 (554 aa).

Disordered stretches follow at residues 14 to 34 (RGMEDVGLAAGRSQREKKRSY), 47 to 368 (QVRK…SAYQ), and 418 to 468 (HKQN…SPAK). Residues 117 to 127 (TSPQVDTSTTH) are compositionally biased toward polar residues. The segment covering 221 to 230 (TGREETESRS) has biased composition (basic and acidic residues). Over residues 242–255 (PRSGGTPDSASSTG) the composition is skewed to polar residues. The span at 272–300 (MKKKKKSKKSKKKKDKHKDEKHRKHSKSK) shows a compositional bias: basic residues. The segment covering 317–335 (LPSPPPPTATTPTSPPSVP) has biased composition (pro residues). Residues 342–358 (HAEEQLDKKKKKEDPEK) are compositionally biased toward basic and acidic residues. A DNA-binding region (HMG box) is located at residues 360 to 428 (KKKNMSAYQV…KQNKAEATTV (69 aa)). A compositionally biased stretch (low complexity) spans 434–466 (SSESAARSKGSSSGLPSPNKKSPTSVVSFSTSP).

Interacts with nlk.2.

The protein localises to the nucleus. Its function is as follows. Negatively regulates Wnt/beta-catenin signaling during development. This Xenopus tropicalis (Western clawed frog) protein is HMG box-containing protein 4 (hmgxb4).